The chain runs to 509 residues: MKRALISVSDKNGIVPFAEKLVELGVEIISTGGTKATFEQAGIPVTGIEDVTKFPEMLDGRVKTLHPAIHGGLLARRDTAEHMEAIAAHDIEPIDLVVVNLYPFQETIQKPGVTLEEAIENIDIGGPSMLRSAAKNYAAVTVVVDAADYDTVLTELKEHGATTFETRQRLAAKVFRHTAAYDAVIAEYLTKITGETFPEKVTFTYNRKQALRYGENPHQDAAFYTEPVALLNSISAAKQLHGKELSYNNIRDADAALKIANEFTEPVAVAVKHMNPCGVGVGENIEEAYLKAYEADETSIFGGIVALNKEVDAKTAEHMSKIFLEIIIAPSFSEEAFTILAKKKNIRLLTVPFAGSVESLEKTSVNGGLLIQASDSFVEDSAGYEVVTEKQPTEAEMKALLAQWKIVKHVKSNAIVVGSDKQTLGIGAGQMNRIGSALIALEQAGEKAKGAVLASDAFFPMDDTVEAAAKAGITAIIQPGGSIKDKESIAMADKYGISMVLTHVRHFKH.

The 144-residue stretch at 1 to 144 (MKRALISVSD…KNYAAVTVVV (144 aa)) folds into the MGS-like domain.

It belongs to the PurH family.

The enzyme catalyses (6R)-10-formyltetrahydrofolate + 5-amino-1-(5-phospho-beta-D-ribosyl)imidazole-4-carboxamide = 5-formamido-1-(5-phospho-D-ribosyl)imidazole-4-carboxamide + (6S)-5,6,7,8-tetrahydrofolate. The catalysed reaction is IMP + H2O = 5-formamido-1-(5-phospho-D-ribosyl)imidazole-4-carboxamide. Its pathway is purine metabolism; IMP biosynthesis via de novo pathway; 5-formamido-1-(5-phospho-D-ribosyl)imidazole-4-carboxamide from 5-amino-1-(5-phospho-D-ribosyl)imidazole-4-carboxamide (10-formyl THF route): step 1/1. It participates in purine metabolism; IMP biosynthesis via de novo pathway; IMP from 5-formamido-1-(5-phospho-D-ribosyl)imidazole-4-carboxamide: step 1/1. This chain is Bifunctional purine biosynthesis protein PurH, found in Listeria welshimeri serovar 6b (strain ATCC 35897 / DSM 20650 / CCUG 15529 / CIP 8149 / NCTC 11857 / SLCC 5334 / V8).